The following is a 241-amino-acid chain: SURF1-like protein (241 aa).

2 consecutive transmembrane segments (helical) span residues 5 to 25 (LTVLITFIILVLLGFWQLNRL) and 199 to 219 (LEYAFTWFGLAASLVVIYRIY).

The protein belongs to the SURF1 family.

It localises to the cell membrane. In Rickettsia bellii (strain RML369-C), this protein is SURF1-like protein.